Here is a 290-residue protein sequence, read N- to C-terminus: Ankyrin repeat and SOCS box protein 9 (290 aa).

Met1 carries the N-acetylmethionine modification. The segment covering 1–11 has biased composition (basic and acidic residues); that stretch reads MDGEQRGRSDR. A disordered region spans residues 1 to 20; sequence MDGEQRGRSDRPGGSPHLPF. ANK repeat units follow at residues 31–60, 64–93, 97–126, 129–158, 162–191, and 194–223; these read SDWS…PVNI, DHVS…QVNG, DWRT…TPHP, ELAS…NIDY, HLGT…SVNQ, and GLDS…NAQA. One can recognise an SOCS box domain in the interval 236–290; that stretch reads PLESPLIQIFLQNEGPQSLRQLCRLRIRKCFGIRQHHKISELLLPEDLKRFLLHL.

The protein belongs to the ankyrin SOCS box (ASB) family. Substrate-recognition component of the ECS(ASB9) complex, composed of ASB9, CUL5, ELOB, ELOC and RNF7/RBX2.

Its subcellular location is the mitochondrion. Its pathway is protein modification; protein ubiquitination. Functionally, substrate-recognition component of a cullin-5-RING E3 ubiquitin-protein ligase complex (ECS complex, also named CRL5 complex), which mediates the ubiquitination and subsequent proteasomal degradation of target proteins. The ECS(ASB9) complex catalyzes ubiquitination of creatine kinases CKB and CKMT1A. In Mus musculus (Mouse), this protein is Ankyrin repeat and SOCS box protein 9.